The chain runs to 108 residues: UPF0060 membrane protein DSY4157 (108 aa).

4 consecutive transmembrane segments (helical) span residues 6–26 (ILFI…WLWL), 31–51 (PYWY…IPTL), 60–80 (VYAA…WGVD), and 86–106 (TYDW…LWAP).

The protein belongs to the UPF0060 family.

Its subcellular location is the cell membrane. This chain is UPF0060 membrane protein DSY4157, found in Desulfitobacterium hafniense (strain Y51).